A 105-amino-acid chain; its full sequence is Imizoquin biosynthesis cluster protein I (105 aa).

The segment covering 1–15 (MSSGEPTTMTPSPSE) has biased composition (polar residues). Positions 1–43 (MSSGEPTTMTPSPSERTPLLSNGSGGAADDGGTTVTISKPNDG) are disordered.

Its pathway is secondary metabolite biosynthesis. Functionally, part of the gene cluster that mediates the biosynthesis of imizoquins A to D, tripeptide-derived alkaloids that serve a protective role against oxidative stress that are essential for normal germination. ImqB is a canonical three-module NRPS that assembles the tripeptide backbone of the imizoquins via condensation of Trp, Tyr, and Leu-derived precursors. N-methylation by imqF and phenol oxidation by imqC, followed by cyclization via the FAD-dependent oxidase imqH carry out the three-step transformation of L-tyrosine into tetrahydroisoquinoline. Importantly, this sequence requires the presence of a free amine in the tyrosine moiety, indicating that isoquinoline formation occurs prior to peptide bond formation. The imidazolidin-4-one ring of imizoquins could form following additional oxidation of the methyl-derived bridgehead carbon by imqH. Lastly, O-methylation by imqG and leucine hydroxylation by imqE complete biosynthesis of the imizoquins. The sequence is that of Imizoquin biosynthesis cluster protein I from Aspergillus flavus (strain ATCC 200026 / FGSC A1120 / IAM 13836 / NRRL 3357 / JCM 12722 / SRRC 167).